The sequence spans 804 residues: Exocyst complex component 6 (804 aa).

The protein belongs to the SEC15 family. In terms of assembly, the exocyst complex is composed of EXOC1, EXOC2, EXOC3, EXOC4, EXOC5, EXOC6, EXOC7 and EXOC8. Interacts with CNTRL. Interacts with RAB11A in a GTP-dependent manner.

It is found in the cytoplasm. Its subcellular location is the perinuclear region. It localises to the cell projection. The protein localises to the growth cone. The protein resides in the midbody. It is found in the midbody ring. Functionally, component of the exocyst complex involved in the docking of exocytic vesicles with fusion sites on the plasma membrane. Together with RAB11A, RAB3IP, RAB8A, PARD3, PRKCI, ANXA2, CDC42 and DNMBP promotes transcytosis of PODXL to the apical membrane initiation sites (AMIS), apical surface formation and lumenogenesis. This Rattus norvegicus (Rat) protein is Exocyst complex component 6 (Exoc6).